The following is a 353-amino-acid chain: Heterogeneous nuclear ribonucleoproteins A2/B1 (353 aa).

Position 1 is an N-acetylmethionine (M1). T4 carries the phosphothreonine modification. The Nuclear localization signal motif lies at 9 to 15; the sequence is PLERKKR. RRM domains lie at 21-104 and 112-191; these read RKLF…ESGK and KKLF…LSRQ. Residue K22 forms a Glycyl lysine isopeptide (Lys-Gly) (interchain with G-Cter in SUMO2) linkage. Residue S29 is modified to Phosphoserine. At R38 the chain carries Omega-N-methylarginine. Phosphoserine is present on S85. K104 carries the N6,N6-dimethyllysine; alternate modification. K104 participates in a covalent cross-link: Glycyl lysine isopeptide (Lys-Gly) (interchain with G-Cter in SUMO2); alternate. Residues K112, K120, and K137 each participate in a glycyl lysine isopeptide (Lys-Gly) (interchain with G-Cter in SUMO2) cross-link. The residue at position 140 (T140) is a Phosphothreonine. S149 is modified (phosphoserine). A Glycyl lysine isopeptide (Lys-Gly) (interchain with G-Cter in SUMO2) cross-link involves residue K152. T159 bears the Phosphothreonine mark. Glycyl lysine isopeptide (Lys-Gly) (interchain with G-Cter in SUMO2); alternate cross-links involve residues K168 and K173. N6-acetyllysine; alternate is present on residues K168 and K173. At T176 the chain carries Phosphothreonine. K186 is covalently cross-linked (Glycyl lysine isopeptide (Lys-Gly) (interchain with G-Cter in SUMO2)). Phosphoserine occurs at positions 189 and 201. The disordered stretch occupies residues 193–353; it reads MQEVQSSRSG…SGGYGGRSRY (161 aa). Gly residues predominate over residues 202-223; it reads GRGGNFGFGDSRGGGGNFGPGP. R203 is subject to Asymmetric dimethylarginine; alternate. Residue R203 is modified to Dimethylated arginine; alternate. Position 203 is an omega-N-methylarginine; alternate (R203). S212 is modified (phosphoserine). R213 bears the Asymmetric dimethylarginine; alternate mark. R213 is subject to Dimethylated arginine; alternate. Omega-N-methylarginine; alternate is present on R213. S225 carries the phosphoserine modification. Position 228 is an omega-N-methylarginine (R228). Residues S231 and S236 each carry the phosphoserine modification. R238 is subject to Omega-N-methylarginine. Position 259 is a phosphoserine (S259). R266 is modified (asymmetric dimethylarginine; alternate). R266 is subject to Omega-N-methylarginine; alternate. Positions 308–347 are nuclear targeting sequence; that stretch reads QQPSNYGPMKSGNFGGSRNMGGPYGGGNYGPGGSGGSGGY. Over residues 320–353 the composition is skewed to gly residues; sequence NFGGSRNMGGPYGGGNYGPGGSGGSGGYGGRSRY. Position 324 is a phosphoserine (S324). Position 325 is an omega-N-methylarginine (R325). Position 331 is a phosphotyrosine (Y331). Phosphoserine is present on residues S341 and S344. Y347 carries the phosphotyrosine modification. R350 is subject to Omega-N-methylarginine.

Identified in the spliceosome C complex. Identified in a IGF2BP1-dependent mRNP granule complex containing untranslated mRNAs. Interacts with IGF2BP1. Interacts with C9orf72. Interacts with DGCR8. Interacts with TARDBP. Interacts with CKAP5. Interacts with PPIA/CYPA. Interacts (via C-terminus) with FAM76B; the interaction results in retention of HNRNPA2B1 in the nucleus and inhibition of the NF-kappa-B-mediated inflammatory pathway. Interacts with NF-kappa-B inhibitors NFKBIA and NFKBIE; the interaction may be mediated by the RRM2 domain of HNRNPA2B1, and HNRNPA2B1 may interact simultaneously with FAM76B and either NFKBIA or NFKBIE to form a complex. Sumoylated in exosomes, promoting miRNAs-binding. Post-translationally, asymmetric dimethylation at Arg-266 constitutes the major methylation site. According to a report, methylation affects subcellular location and promotes nuclear localization. According to another report, methylation at Arg-266 does not influence nucleocytoplasmic shuttling.

It localises to the nucleus. Its subcellular location is the nucleoplasm. It is found in the cytoplasmic granule. The protein localises to the secreted. The protein resides in the extracellular exosome. Its function is as follows. Heterogeneous nuclear ribonucleoprotein (hnRNP) that associates with nascent pre-mRNAs, packaging them into hnRNP particles. The hnRNP particle arrangement on nascent hnRNA is non-random and sequence-dependent and serves to condense and stabilize the transcripts and minimize tangling and knotting. Packaging plays a role in various processes such as transcription, pre-mRNA processing, RNA nuclear export, subcellular location, mRNA translation and stability of mature mRNAs. Forms hnRNP particles with at least 20 other different hnRNP and heterogeneous nuclear RNA in the nucleus. Involved in transport of specific mRNAs to the cytoplasm in oligodendrocytes and neurons: acts by specifically recognizing and binding the A2RE (21 nucleotide hnRNP A2 response element) or the A2RE11 (derivative 11 nucleotide oligonucleotide) sequence motifs present on some mRNAs, and promotes their transport to the cytoplasm. Specifically binds single-stranded telomeric DNA sequences, protecting telomeric DNA repeat against endonuclease digestion. Also binds other RNA molecules, such as primary miRNA (pri-miRNAs): acts as a nuclear 'reader' of the N6-methyladenosine (m6A) mark by specifically recognizing and binding a subset of nuclear m6A-containing pri-miRNAs. Binding to m6A-containing pri-miRNAs promotes pri-miRNA processing by enhancing binding of DGCR8 to pri-miRNA transcripts. Involved in miRNA sorting into exosomes following sumoylation, possibly by binding (m6A)-containing pre-miRNAs. Acts as a regulator of efficiency of mRNA splicing, possibly by binding to m6A-containing pre-mRNAs. Plays a role in the splicing of pyruvate kinase PKM by binding repressively to sequences flanking PKM exon 9, inhibiting exon 9 inclusion and resulting in exon 10 inclusion and production of the PKM M2 isoform. The protein is Heterogeneous nuclear ribonucleoproteins A2/B1 (HNRNPA2B1) of Pongo abelii (Sumatran orangutan).